Here is a 444-residue protein sequence, read N- to C-terminus: GTPase Der (444 aa).

EngA-type G domains are found at residues 3 to 167 and 180 to 353; these read PIVA…PEAE and LRLA…AECQ. Residues 9 to 16, 56 to 60, 119 to 122, 186 to 193, 233 to 237, and 298 to 301 contribute to the GTP site; these read GRPNVGKS, DTGGM, NKVD, GRPNAGKS, DTAGV, and NKTD. The region spanning 354-438 is the KH-like domain; it reads IRIGTGELNR…PVKVVCRASH (85 aa).

The protein belongs to the TRAFAC class TrmE-Era-EngA-EngB-Septin-like GTPase superfamily. EngA (Der) GTPase family. In terms of assembly, associates with the 50S ribosomal subunit.

Its function is as follows. GTPase that plays an essential role in the late steps of ribosome biogenesis. The sequence is that of GTPase Der from Solidesulfovibrio magneticus (strain ATCC 700980 / DSM 13731 / RS-1) (Desulfovibrio magneticus).